Here is a 163-residue protein sequence, read N- to C-terminus: Large ribosomal subunit protein uL10 (163 aa).

Belongs to the universal ribosomal protein uL10 family. As to quaternary structure, part of the ribosomal stalk of the 50S ribosomal subunit. The N-terminus interacts with L11 and the large rRNA to form the base of the stalk. The C-terminus forms an elongated spine to which L12 dimers bind in a sequential fashion forming a multimeric L10(L12)X complex.

Its function is as follows. Forms part of the ribosomal stalk, playing a central role in the interaction of the ribosome with GTP-bound translation factors. In Actinobacillus pleuropneumoniae serotype 5b (strain L20), this protein is Large ribosomal subunit protein uL10.